The sequence spans 310 residues: Methionyl-tRNA formyltransferase (310 aa).

Residue 109–112 (SLLP) participates in (6S)-5,6,7,8-tetrahydrofolate binding.

The protein belongs to the Fmt family.

The enzyme catalyses L-methionyl-tRNA(fMet) + (6R)-10-formyltetrahydrofolate = N-formyl-L-methionyl-tRNA(fMet) + (6S)-5,6,7,8-tetrahydrofolate + H(+). Its function is as follows. Attaches a formyl group to the free amino group of methionyl-tRNA(fMet). The formyl group appears to play a dual role in the initiator identity of N-formylmethionyl-tRNA by promoting its recognition by IF2 and preventing the misappropriation of this tRNA by the elongation apparatus. The chain is Methionyl-tRNA formyltransferase from Pseudomonas putida (strain ATCC 700007 / DSM 6899 / JCM 31910 / BCRC 17059 / LMG 24140 / F1).